A 700-amino-acid chain; its full sequence is Constitutive coactivator of peroxisome proliferator-activated receptor gamma (700 aa).

The protein belongs to the constitutive coactivator of PPAR-gamma family. As to quaternary structure, interacts with ESR1 and RXRA. Interacts with PPARG; in a ligand-independent manner.

It localises to the nucleus. In terms of biological role, functions as a transactivator of PPARG and ESR1. Functions in adipogenesis through PPARG activation. The sequence is that of Constitutive coactivator of peroxisome proliferator-activated receptor gamma (FAM120B) from Bos taurus (Bovine).